The sequence spans 88 residues: Small ribosomal subunit protein bS20 (88 aa).

It belongs to the bacterial ribosomal protein bS20 family.

Functionally, binds directly to 16S ribosomal RNA. The sequence is that of Small ribosomal subunit protein bS20 from Syntrophomonas wolfei subsp. wolfei (strain DSM 2245B / Goettingen).